The chain runs to 843 residues: KN motif and ankyrin repeat domain-containing protein 2 (843 aa).

The disordered stretch occupies residues M1–P31. The interaction with AIFM1 stretch occupies residues M1 to S72. Residues S19, S83, S86, S89, and S92 each carry the phosphoserine modification. R105 carries the omega-N-methylarginine modification. Residues L161–P182 are disordered. The residue at position 170 (T170) is a Phosphothreonine. Coiled coils occupy residues S183–S234 and D282–V313. T331 is subject to Phosphothreonine. Position 358 is a phosphoserine (S358). Positions T410–E577 are disordered. Residues A457 to G470 show a composition bias toward low complexity. S532 is subject to Phosphoserine. Positions A547–Q561 are enriched in polar residues. The stretch at R606–M643 is one ANK 0; degenerate repeat. The interaction with NCOA1 stretch occupies residues T661–F827. ANK repeat units lie at residues P673–A703, T707–S740, D745–H774, E778–A808, and E812–E842.

As to quaternary structure, interacts (non-phosphorylated form) with NCOA1; NCOA2 AND NCOA3. Interacts with AIFM1. Interacts with ARHGDIA; the interaction is direct and may regulate the interaction of ARHGDIA with RHOA, RAC1 and CDC42. Interacts (via ANK repeats 1-5) with KIF21A (via residues 1148-1169). In terms of processing, phosphorylated by casein kinase II upon estrogen stimulation. Phosphorylation induces the release by KANK2 of NCOA1 and its translocation to the nucleus where NCOA1 can activate gene transcription. Widely expressed with highest levels in liver and skeletal muscle.

It is found in the cytoplasm. The protein resides in the mitochondrion. In terms of biological role, involved in transcription regulation by sequestering in the cytoplasm nuclear receptor coactivators such as NCOA1, NCOA2 and NCOA3. Involved in regulation of caspase-independent apoptosis by sequestering the proapoptotic factor AIFM1 in mitochondria. Pro-apoptotic stimuli can induce its proteasomal degradation allowing the translocation of AIFM1 to the nucleus to induce apoptosis. Involved in the negative control of vitamin D receptor signaling pathway. Involved in actin stress fibers formation through its interaction with ARHGDIA and the regulation of the Rho signaling pathway. May thereby play a role in cell adhesion and migration, regulating for instance podocytes migration during development of the kidney. Through the Rho signaling pathway may also regulate cell proliferation. This Mus musculus (Mouse) protein is KN motif and ankyrin repeat domain-containing protein 2 (Kank2).